The sequence spans 176 residues: Large ribosomal subunit protein uL6 (176 aa).

Residues 151 to 170 (RPPEPYKGKGVRYADEQVRR) are compositionally biased toward basic and acidic residues. The interval 151–176 (RPPEPYKGKGVRYADEQVRRKEAKKK) is disordered.

The protein belongs to the universal ribosomal protein uL6 family. As to quaternary structure, part of the 50S ribosomal subunit.

Functionally, this protein binds to the 23S rRNA, and is important in its secondary structure. It is located near the subunit interface in the base of the L7/L12 stalk, and near the tRNA binding site of the peptidyltransferase center. This Shewanella halifaxensis (strain HAW-EB4) protein is Large ribosomal subunit protein uL6.